A 508-amino-acid polypeptide reads, in one-letter code: Protein FAM217A (508 aa).

The protein belongs to the FAM217 family.

The sequence is that of Protein FAM217A (FAM217A) from Homo sapiens (Human).